The chain runs to 284 residues: Phosphatidylglycerol--prolipoprotein diacylglyceryl transferase (284 aa).

7 consecutive transmembrane segments (helical) span residues 21–41 (IEVHWYGLAYACAIVVAFYMA), 62–82 (YFLWAELGIVLGARVGYILIY), 106–126 (FVGIRGMSYHGGLVGFLIASY), 136–156 (LLIYLDLIAISLPLGYVFGRI), 190–210 (PSQLIEAFLEGVIVFLMVMWA), 218–238 (GLLIVVYGLGYSLMRFIAEFY), and 252–272 (LSMGQILSLFMVIVSLGILLY). Arginine 155 serves as a coordination point for a 1,2-diacyl-sn-glycero-3-phospho-(1'-sn-glycerol).

The protein belongs to the Lgt family.

The protein resides in the cell inner membrane. It carries out the reaction L-cysteinyl-[prolipoprotein] + a 1,2-diacyl-sn-glycero-3-phospho-(1'-sn-glycerol) = an S-1,2-diacyl-sn-glyceryl-L-cysteinyl-[prolipoprotein] + sn-glycerol 1-phosphate + H(+). Its pathway is protein modification; lipoprotein biosynthesis (diacylglyceryl transfer). Catalyzes the transfer of the diacylglyceryl group from phosphatidylglycerol to the sulfhydryl group of the N-terminal cysteine of a prolipoprotein, the first step in the formation of mature lipoproteins. The sequence is that of Phosphatidylglycerol--prolipoprotein diacylglyceryl transferase from Helicobacter pylori (strain P12).